Consider the following 213-residue polypeptide: Uridine kinase (213 aa).

14 to 21 contributes to the ATP binding site; the sequence is GASASGKS.

It belongs to the uridine kinase family.

The protein resides in the cytoplasm. The enzyme catalyses uridine + ATP = UMP + ADP + H(+). It carries out the reaction cytidine + ATP = CMP + ADP + H(+). The protein operates within pyrimidine metabolism; CTP biosynthesis via salvage pathway; CTP from cytidine: step 1/3. It participates in pyrimidine metabolism; UMP biosynthesis via salvage pathway; UMP from uridine: step 1/1. This Vibrio atlanticus (strain LGP32) (Vibrio splendidus (strain Mel32)) protein is Uridine kinase.